An 852-amino-acid polypeptide reads, in one-letter code: MLNKSAALVPVVLAFLFLFLCFQCLYADIRCLTGKDGAVHLEMEAKPLTIEPRPGVFFDAWGYCLKGDVPTVPGPVIKVREGTKVKILFRNKLTVPASIHPHGVKYTTANVGVNIAGNPASIVAPGDSRIFEWDTAGTPGTWFYHSYVFERGGEEGLSRGLWGALIVEPVGGDPNPPDKEFVVFMHAFNVNGQEYYAFNNKSGDIELMRGDSSAFPGETWKAKMGDKVRFHLINITEEAHTFHTHGHRWLDKSCDKLIDTIGLNPFDSYVLDFVAGEGVGKGNWAFHCQSQEHMMNGMFGIFMVEEGKRVNAVIASCDEGRKTLSAPGQDRQPPTLEGFSGAYMYPEITEKNMYESFAGLEKGDGIWGDYYSPIPLYTYFNPSRHYVPPESDAYTNLLVKYRPDQCVECHEETTPGIVAEWKMSNHANPKKNPHVSAETQEIEALIGKELNNWRPGTKDGVYCSYCHGSDHEKLFMPTVDNSCGACHPKQAAEFIKGRDHGRPNHPQSWEGNVSTPWYAEYYRRGEGYSMVGCDQCHQNMSSCDDCHSRHRFSAAEARRPEACSICHMGPDHPDWESYSRSKWGVIYETTKERWNWDKNLAEVIPGEDYLAPTCQYCHMYVGNNKWEMNVETKGIWRMGVIPPKEVEFKSGLKDFPYGIKIPPMDKKLEIYSAESQEKRRKWVELCSKCHSSRFAGMWLDSLDQYMFESWRRIDEAQLIIEKLFSENAIEPPPEKRPPFPLSDLIIKVLGAEKLGAEMYRLFKQTNGHLPVIGPILGAYSIFTQNEGNPGGIEREYAEMWFWSHLQGYKGAAHAQPDISWWWGTAQGVGNLTRIRDEAEKLRRLKSGSSSGF.

Positions 1 to 27 are cleaved as a signal peptide; the sequence is MLNKSAALVPVVLAFLFLFLCFQCLYA. Residues 28–327 are nitrite reductase domain; sequence DIRCLTGKDG…DEGRKTLSAP (300 aa). Plastocyanin-like domains follow at residues 72-169 and 217-307; these read VPGP…IVEP and GETW…VEEG. Cu cation-binding residues include H102 and H145. The tract at residues 328 to 827 is hydroxylamine oxidoreductase domain; it reads GQDRQPPTLE…ISWWWGTAQG (500 aa). Heme is bound by residues C406, C409, H410, H426, C463, C466, H467, H471, C483, C486, H487, H505, H537, C543, C546, H547, H550, C563, C566, H567, C614, C617, H618, C686, C689, H690, and H813.

In the N-terminal section; belongs to the multicopper oxidase family. It depends on Cu cation as a cofactor. The cofactor is heme.

The protein localises to the encapsulin nanocompartment. It carries out the reaction hydroxylamine + 4 Fe(III)-[cytochrome c] + H2O = 4 Fe(II)-[cytochrome c] + nitrite + 5 H(+). The enzyme catalyses nitric oxide + Fe(III)-[cytochrome c] + H2O = Fe(II)-[cytochrome c] + nitrite + 2 H(+). In terms of biological role, a nitrite reductase-hydroxylamine oxidoreductase protein that probably functions in the type 1 encapsulin nanocompartment. Probably involved in reductive catalysis. Targeted to the encapsulin nanocompartment by association with the diheme domain of the encapsulin shell protein (AC Q1Q6L7). Catalyzes the reduction of nitrite to nitric oxide (NO). Catalyzes the oxidation of hydroxylamine to nitrite. The chain is Probable nitrite reductase-hydroxylamine oxidoreductase fusion protein from Kuenenia stuttgartiensis.